The chain runs to 500 residues: Cytochrome P450 2D26 (500 aa).

Phosphoserine is present on Ser-249. Cys-446 contacts heme.

The protein belongs to the cytochrome P450 family. Requires heme as cofactor.

The protein resides in the endoplasmic reticulum membrane. It is found in the microsome membrane. It catalyses the reaction an organic molecule + reduced [NADPH--hemoprotein reductase] + O2 = an alcohol + oxidized [NADPH--hemoprotein reductase] + H2O + H(+). Functionally, cytochromes P450 are a group of heme-thiolate monooxygenases. In liver microsomes, this enzyme is involved in an NADPH-dependent electron transport pathway. It oxidizes a variety of structurally unrelated compounds, including steroids, fatty acids, and xenobiotics. The sequence is that of Cytochrome P450 2D26 from Mus musculus (Mouse).